The primary structure comprises 625 residues: DELLA protein SLR1 (625 aa).

The disordered stretch occupies residues 1-34; sequence MKREYQEAGGSSGGGSSADMGSCKDKVMAGAAGE. The DELLA motif motif lies at 39–43; that stretch reads DELLA. Residues 167–208 form a disordered region; sequence TADPSAADSARDTKRMRTGGGSTSSSSSSSSSLGGGASRGSV. A compositionally biased stretch (low complexity) spans 189 to 198; it reads TSSSSSSSSS. The region spanning 232–621 is the GRAS domain; sequence VDTQEAGIRL…RPLIATSAWR (390 aa). The leucine repeat I (LRI) stretch occupies residues 239–294; that stretch reads IRLVHALLACAEAVQQENFAAAEALVKQIPTLAASQGGAMRKVAAYFGEALARRVY. Residues 241–278 are required for possible homodimerization; the sequence is LVHALLACAEAVQQENFAAAEALVKQIPTLAASQGGAM. Positions 246-250 match the LxCxE motif motif; the sequence is LACAE. A VHIID region spans residues 313–378; it reads HAHFYESCPY…GGPPSFRLTG (66 aa). Residues 344-348 carry the VHIID motif; sequence VHVVD. The interval 392–431 is leucine repeat II (LRII); the sequence is QVGWKLAQFAHTIRVDFQYRGLVAATLADLEPFMLQPEGE. The PFYRE stretch occupies residues 441-542; that stretch reads IAVNSVFELH…EVYLGRQICN (102 aa). The LXXLL motif signature appears at 449 to 453; the sequence is LHRLL. The tract at residues 545–621 is SAW; that stretch reads ACEGAERTER…RPLIATSAWR (77 aa).

The protein belongs to the GRAS family. DELLA subfamily.

Probable transcriptional regulator that acts as a repressor of the gibberellin (GA) signaling pathway. Probably acts by participating in large multiprotein complexes that repress transcription of GA-inducible genes. Upon GA application, it is degraded by the proteasome, allowing the GA signaling pathway. In contrast, its overexpression prevents the GA signaling pathway and induces a dwarf phenotype. The protein is DELLA protein SLR1 of Oryza sativa subsp. indica (Rice).